We begin with the raw amino-acid sequence, 339 residues long: Dihydroorotate dehydrogenase (quinone) (339 aa).

Residues 62–66 (AGMDK) and Thr86 each bind FMN. Lys66 is a substrate binding site. 111–115 (NRMGF) is a substrate binding site. 2 residues coordinate FMN: Asn139 and Asn172. A substrate-binding site is contributed by Asn172. The active-site Nucleophile is Ser175. Asn177 contributes to the substrate binding site. Lys217 and Thr245 together coordinate FMN. Substrate is bound at residue 246 to 247 (NT). FMN-binding positions include Gly268, Gly297, and 318–319 (YS).

It belongs to the dihydroorotate dehydrogenase family. Type 2 subfamily. As to quaternary structure, monomer. FMN is required as a cofactor.

Its subcellular location is the cell membrane. The catalysed reaction is (S)-dihydroorotate + a quinone = orotate + a quinol. The protein operates within pyrimidine metabolism; UMP biosynthesis via de novo pathway; orotate from (S)-dihydroorotate (quinone route): step 1/1. Functionally, catalyzes the conversion of dihydroorotate to orotate with quinone as electron acceptor. In Shewanella baltica (strain OS185), this protein is Dihydroorotate dehydrogenase (quinone).